The following is a 288-amino-acid chain: 4-diphosphocytidyl-2-C-methyl-D-erythritol kinase (288 aa).

The active site involves Lys12. ATP is bound at residue 95-105; sequence PAGGGVGGGSS. The active site involves Asp137.

Belongs to the GHMP kinase family. IspE subfamily.

It carries out the reaction 4-CDP-2-C-methyl-D-erythritol + ATP = 4-CDP-2-C-methyl-D-erythritol 2-phosphate + ADP + H(+). It participates in isoprenoid biosynthesis; isopentenyl diphosphate biosynthesis via DXP pathway; isopentenyl diphosphate from 1-deoxy-D-xylulose 5-phosphate: step 3/6. Its function is as follows. Catalyzes the phosphorylation of the position 2 hydroxy group of 4-diphosphocytidyl-2C-methyl-D-erythritol. The protein is 4-diphosphocytidyl-2-C-methyl-D-erythritol kinase of Halorhodospira halophila (strain DSM 244 / SL1) (Ectothiorhodospira halophila (strain DSM 244 / SL1)).